Reading from the N-terminus, the 525-residue chain is MSNPVQSDKDRVVIFDTTLRDGEQCPGATMTFEEKLNIAAMLDDMGVDIIEAGFPIASDGDFEAVNEIAKRSKNAVICGLSRAGAKDIDRCAEAIRPAKRGRIHTFLSTSPVHMKYKLQMDPQQVFELVISSVTRARNHTDDVEWSSEDGTRTEFDFLCRCVEAAIKAGASTINIPDTVGYAVPEEYYDLFKRVRETVPNSDKAVFSVHCHNDLGMAVANSMAGVRAGARQIECTINGIGERAGNAALEEVVMAMRVRNDKLPFWNKIDTTQLTHASKVVSAATSFPVQYNKAIVGRNAFAHESGIHQDGMLKNAQTYEIMLPETVGVKQTSLVMGKHSGRHAFIHKLEEMGHKLSSNQVEDAFVRFKALADRKKQIYDEDIEALIDEGMVSAHDRIKLLSLSVIAGTRGPQRATMKLDIDGVTRIEESEGNGPVDAVFNCIKSLVPHEAKLELYQVHAVTEGTDAQAEVSVRLSQDGRSMTARAADPDTLVASAKAYLGALNKLVMKRQRDVAPGHGASAAAAS.

Residues V12 to T274 form the Pyruvate carboxyltransferase domain. The Mn(2+) site is built by D21, H209, H211, and N245. A regulatory domain region spans residues K398–S525.

This sequence belongs to the alpha-IPM synthase/homocitrate synthase family. LeuA type 1 subfamily. As to quaternary structure, homodimer. Mn(2+) is required as a cofactor.

It localises to the cytoplasm. The catalysed reaction is 3-methyl-2-oxobutanoate + acetyl-CoA + H2O = (2S)-2-isopropylmalate + CoA + H(+). The protein operates within amino-acid biosynthesis; L-leucine biosynthesis; L-leucine from 3-methyl-2-oxobutanoate: step 1/4. Its function is as follows. Catalyzes the condensation of the acetyl group of acetyl-CoA with 3-methyl-2-oxobutanoate (2-ketoisovalerate) to form 3-carboxy-3-hydroxy-4-methylpentanoate (2-isopropylmalate). This Bradyrhizobium sp. (strain ORS 278) protein is 2-isopropylmalate synthase.